Consider the following 204-residue polypeptide: Urease accessory protein UreG (204 aa).

Residue 13–20 (GPVGSGKT) participates in GTP binding.

It belongs to the SIMIBI class G3E GTPase family. UreG subfamily. Homodimer. UreD, UreF and UreG form a complex that acts as a GTP-hydrolysis-dependent molecular chaperone, activating the urease apoprotein by helping to assemble the nickel containing metallocenter of UreC. The UreE protein probably delivers the nickel.

It localises to the cytoplasm. In terms of biological role, facilitates the functional incorporation of the urease nickel metallocenter. This process requires GTP hydrolysis, probably effectuated by UreG. This is Urease accessory protein UreG from Acinetobacter baylyi (strain ATCC 33305 / BD413 / ADP1).